Reading from the N-terminus, the 305-residue chain is MGENASFWESLIYAHPTCVTWKQEAEGSIYHLASILFVVGFMGGSGFSGLLYVFSLLGLGFLCSSVWAWLDVCAADIFSWNFILFAICFVQFIYVTYQVRSVSFDKEFQELYSALFQPLGISLTVYRKIVLCCDAEVITLEKEHCYAMQGKTPIDKLSLLVSGRIRVTVDGEFLHYIFPLQFLDSPEWDSLRPTEEGIFQVTLTAETDCRYVAWRRKKLYLLFAKHRFISRLFSILIGSDIAEKLYALNDRVHVGKGFRYDIRLPNFYHTSLPETPPVPPPRRLQRRSSGRPRPGVPNCSSPRKQ.

Asparagine 4 carries an N-linked (GlcNAc...) asparagine glycan. The next 3 helical transmembrane spans lie at 34–54 (SILFVVGFMGGSGFSGLLYVF), 55–75 (SLLGLGFLCSSVWAWLDVCAA), and 77–99 (IFSWNFILFAICFVQFIYVTYQV). Positions 273–305 (PETPPVPPPRRLQRRSSGRPRPGVPNCSSPRKQ) are disordered. Residue asparagine 298 is glycosylated (N-linked (GlcNAc...) asparagine).

The protein belongs to the popeye family. Expressed first preferentially in atrium and later also in the subepicardial compact layer of the ventricles.

The protein resides in the membrane. May play a role in the maintenance of heart function mediated, at least in part, through cAMP-binding. May play a role in the regulation of KCNK2-mediated current amplitude. The sequence is that of Popeye domain-containing protein 3 (POPDC3) from Gallus gallus (Chicken).